The sequence spans 422 residues: CinA-like protein (422 aa).

This sequence belongs to the CinA family.

The protein is CinA-like protein of Mycolicibacterium vanbaalenii (strain DSM 7251 / JCM 13017 / BCRC 16820 / KCTC 9966 / NRRL B-24157 / PYR-1) (Mycobacterium vanbaalenii).